The following is a 260-amino-acid chain: Snake venom serine protease 2B (260 aa).

The N-terminal stretch at 1 to 18 (MVLIRVLANLLILQLSYA) is a signal peptide. Positions 19–24 (QKSSEL) are excised as a propeptide. In terms of domain architecture, Peptidase S1 spans 25 to 251 (VVGGDECNIN…HLDWIQSIIA (227 aa)). Intrachain disulfides connect Cys31–Cys165, Cys52–Cys68, Cys102–Cys258, Cys144–Cys212, Cys176–Cys191, and Cys202–Cys227. The Charge relay system role is filled by His67. Asn101 and Asn105 each carry an N-linked (GlcNAc...) asparagine glycan. Catalysis depends on Asp112, which acts as the Charge relay system. Asn123 and Asn156 each carry an N-linked (GlcNAc...) asparagine glycan. Ser206 serves as the catalytic Charge relay system.

This sequence belongs to the peptidase S1 family. Snake venom subfamily. As to quaternary structure, monomer. As to expression, expressed by the venom gland.

The protein localises to the secreted. Snake venom serine protease that may act in the hemostasis system of the prey. The sequence is that of Snake venom serine protease 2B (TLG2B) from Craspedocephalus gramineus (Bamboo pit viper).